The chain runs to 94 residues: Large ribosomal subunit protein bL25 (94 aa).

This sequence belongs to the bacterial ribosomal protein bL25 family. In terms of assembly, part of the 50S ribosomal subunit; part of the 5S rRNA/L5/L18/L25 subcomplex. Contacts the 5S rRNA. Binds to the 5S rRNA independently of L5 and L18.

This is one of the proteins that binds to the 5S RNA in the ribosome where it forms part of the central protuberance. This Sodalis glossinidius (strain morsitans) protein is Large ribosomal subunit protein bL25.